Here is a 527-residue protein sequence, read N- to C-terminus: MTVTDTAASRLSRLKAHADLLAQSLRGIEKEGLRVDAQGKLAVTPHPSGLGSALTNEHVTTDYSEALLELITGTHGRVEPLLAELENTHRFVYSVLDGEYIWNQSMPATLPPEADIPIAWYGRSNTGMLKHVYRRGLAERYGKAMQCIAGVHYNFSLPDALWEILDPGAADPQTRRSRGYIGLIRNFTRYSWLLMYLFGAAPALSRSFMGDRPHPLQALDADTLYLPHATSLRMSDLGYQNNKAQAQLKLCYNDLDTFLARLYGAVTQPWPEYQAIGTHRDGQWIQLNTNVLQIENEYYSSIRPKRATGRCERPVTALAERGVQYVEVRCLDIDPQQPVGIAADTARFVDAFLLFCAVSDSPYFPQNGYCQRSADNFSVVVKEGRKPGLMLDRDGVAISLPDWGRELLDHIAPYAALYDQALGGDAYARALQAQHAKLGHADDTPSARLLAELRDQGVPFHEYSLQLSRRHADALRAQPLPADVAAGYAEAARQSHAEQARLEQSDDVDFDTYVARYQAALKAPGSR.

Belongs to the glutamate--cysteine ligase type 1 family. Type 1 subfamily.

The enzyme catalyses L-cysteine + L-glutamate + ATP = gamma-L-glutamyl-L-cysteine + ADP + phosphate + H(+). Its pathway is sulfur metabolism; glutathione biosynthesis; glutathione from L-cysteine and L-glutamate: step 1/2. In Bordetella petrii (strain ATCC BAA-461 / DSM 12804 / CCUG 43448), this protein is Glutamate--cysteine ligase.